A 48-amino-acid chain; its full sequence is Thiamine thiazole synthase, chloroplastic (48 aa).

Residues Ala18 and Val40 each contribute to the substrate site.

The protein belongs to the THI4 family. As to quaternary structure, homooctamer. The cofactor is Fe cation.

It is found in the plastid. The protein resides in the chloroplast. The catalysed reaction is [ADP-thiazole synthase]-L-cysteine + glycine + NAD(+) = [ADP-thiazole synthase]-dehydroalanine + ADP-5-ethyl-4-methylthiazole-2-carboxylate + nicotinamide + 3 H2O + 2 H(+). Its function is as follows. Involved in biosynthesis of the thiamine precursor thiazole. Catalyzes the conversion of NAD and glycine to adenosine diphosphate 5-(2-hydroxyethyl)-4-methylthiazole-2-carboxylic acid (ADT), an adenylated thiazole intermediate. The reaction includes an iron-dependent sulfide transfer from a conserved cysteine residue of the protein to a thiazole intermediate. The enzyme can only undergo a single turnover, which suggests it is a suicide enzyme. May have additional roles in adaptation to various stress conditions and in DNA damage tolerance. This chain is Thiamine thiazole synthase, chloroplastic (THI1), found in Populus euphratica (Euphrates poplar).